The chain runs to 69 residues: Light-harvesting protein B-1015 alpha chain (69 aa).

Residues 2–20 (ATEYRTASWKLWLILDPRR) are Cytoplasmic-facing. The chain crosses the membrane as a helical span at residues 21 to 41 (VLTALFVYLTVIALLIHFGLL). His37 contacts a bacteriochlorophyll. At 42-59 (STDRLNWWEFQRGLPKAA) the chain is on the periplasmic side. A propeptide spanning residues 60-69 (SLVVVPPAVG) is cleaved from the precursor.

The protein belongs to the antenna complex alpha subunit family. In terms of assembly, the core complex is formed by different alpha and beta chains, binding bacteriochlorophyll molecules, and arranged most probably in tetrameric structures disposed around the reaction center. The non-pigmented gamma chains may constitute additional components.

The protein resides in the cell inner membrane. Antenna complexes are light-harvesting systems, which transfer the excitation energy to the reaction centers. The protein is Light-harvesting protein B-1015 alpha chain (pufA) of Blastochloris viridis (Rhodopseudomonas viridis).